The chain runs to 413 residues: ORC1-type DNA replication protein 2 (413 aa).

ATP-binding positions include Thr70–Ala74, Tyr217, and Arg229.

It belongs to the CDC6/cdc18 family. Monomer. Interacts with Cdc6-3, MCM and PolB1. Autophosphorylated in vitro.

Involved in regulation of DNA replication. May play essential roles in origin recognition and cell cycle control of replication. Binds both single-stranded and double-stranded DNA, with a preference for molecules that contain a bubble, a fork, or a tail. Has a weak ATPase activity. Stimulates the binding of the MCM helicase to the origin DNA, but strongly inhibits ATPase and DNA helicase activities of MCM. Also regulates the DNA polymerase and the nuclease activities of PolB1. This chain is ORC1-type DNA replication protein 2 (cdc6-2), found in Saccharolobus solfataricus (strain ATCC 35092 / DSM 1617 / JCM 11322 / P2) (Sulfolobus solfataricus).